Reading from the N-terminus, the 304-residue chain is MIKQRTLKNVIRATGVGLHTGEKVYLTLRPAAPNSGIKFRRVDLAEPVVIDARPDNVGDTTLSTTLVKGDVRISTVEHLLSAFAGLGIDNAYVDVSAPEVPIMDGSAGPFVFLIQSAGVQEQEAPKQFIRIKRPLQVEDGDKWARFEPHDGFKVTFTIDFDHPVFDKNSQTASIEFSSTSFVKEIARARTFGFMRDIEMLRKNRLALGGSMDNAIVVDKFRVLNEDGLRSGDEFVKHKILDAIGDLYLLGHSLIGSFTGYKSGHGLNNHLLCELLKARDAWEMVSFEDEGYAPISYMRTAPAGR.

Residues histidine 78, histidine 237, and aspartate 241 each coordinate Zn(2+). Histidine 264 acts as the Proton donor in catalysis.

Belongs to the LpxC family. Zn(2+) serves as cofactor.

The catalysed reaction is a UDP-3-O-[(3R)-3-hydroxyacyl]-N-acetyl-alpha-D-glucosamine + H2O = a UDP-3-O-[(3R)-3-hydroxyacyl]-alpha-D-glucosamine + acetate. It functions in the pathway glycolipid biosynthesis; lipid IV(A) biosynthesis; lipid IV(A) from (3R)-3-hydroxytetradecanoyl-[acyl-carrier-protein] and UDP-N-acetyl-alpha-D-glucosamine: step 2/6. Functionally, catalyzes the hydrolysis of UDP-3-O-myristoyl-N-acetylglucosamine to form UDP-3-O-myristoylglucosamine and acetate, the committed step in lipid A biosynthesis. This Methylococcus capsulatus (strain ATCC 33009 / NCIMB 11132 / Bath) protein is UDP-3-O-acyl-N-acetylglucosamine deacetylase.